Reading from the N-terminus, the 472-residue chain is Eukaryotic translation initiation factor 2 subunit 3 (472 aa).

Ala-2 is modified (N-acetylalanine; partial). Residue Ser-16 is modified to Phosphoserine. Positions 39–248 constitute a tr-type G domain; that stretch reads QATINIGTIG…IVKKIPVPPR (210 aa). The G1 stretch occupies residues 48 to 55; it reads GHVAHGKS. 51 to 56 serves as a coordination point for GTP; the sequence is AHGKST. A G2 region spans residues 76–80; it reads NITIK. A G3 region spans residues 134-137; that stretch reads DCPG. GTP is bound by residues 190–193 and 225–227; these read NKID and SAQ. The tract at residues 190 to 193 is G4; the sequence is NKID. A G5 region spans residues 225–227; it reads SAQ. The interacts with CDC123 stretch occupies residues 457–469; the sequence is GQIRRGVTIKPTV.

It belongs to the TRAFAC class translation factor GTPase superfamily. Classic translation factor GTPase family. EIF2G subfamily. As to quaternary structure, eukaryotic translation initiation factor 2 eIF2 is a heterotrimeric complex composed of an alpha (EIF2S1), a beta (EIF2S2) and a gamma (EIF2S3) chain. eIF2 is member of the 43S pre-initiation complex (43S PIC). Interacts (via C-terminus) with CDC123; the interaction is direct. In terms of tissue distribution, expressed in testis, brain, liver and muscle.

The protein resides in the cytoplasm. Its subcellular location is the cytosol. It catalyses the reaction GTP + H2O = GDP + phosphate + H(+). Member of the eIF2 complex that functions in the early steps of protein synthesis by forming a ternary complex with GTP and initiator tRNA. This complex binds to a 40S ribosomal subunit, followed by mRNA binding to form the 43S pre-initiation complex (43S PIC). Junction of the 60S ribosomal subunit to form the 80S initiation complex is preceded by hydrolysis of the GTP bound to eIF2 and release of an eIF2-GDP binary complex. In order for eIF2 to recycle and catalyze another round of initiation, the GDP bound to eIF2 must exchange with GTP by way of a reaction catalyzed by eIF-2B. The polypeptide is Eukaryotic translation initiation factor 2 subunit 3 (EIF2S3) (Homo sapiens (Human)).